A 222-amino-acid polypeptide reads, in one-letter code: Sororin-like protein (222 aa).

The interval 1 to 189 (MEAPRSVGGR…VKQEKEDPVS (189 aa)) is disordered. Low complexity predominate over residues 24-33 (SRSSQQSSSS). Positions 47–60 (RLVEQTTLKEKPKD) are enriched in basic and acidic residues. Residues 88–105 (ADLASPASAPSRPQTSRS) are compositionally biased toward low complexity. A Nuclear localization signal motif is present at residues 155–162 (GKKTRQAS). A compositionally biased stretch (basic residues) spans 167 to 179 (KTLKVAPKKRQRT). Positions 192–214 (CQDYIEKQKAYFAEIDAFELPVE) are C-terminal Sororin domain.

It belongs to the sororin family.

The protein resides in the nucleus. Regulator of sister chromatid cohesion in mitosis stabilizing cohesin complex association with chromatin. Antagonizes the action of WAPL proteins (WAPL1 and WAPL2) which stimulates cohesin dissociation from chromatin, particularly during somatic division in root cells and meiocytes during anaphase I. Required for centromeric sister chromatid cohesion during male meiosis (microsporogenesis). Cohesion ensures that chromosome partitioning is accurate in dividing cells and may play an important role in DNA repair. The protein is Sororin-like protein of Arabidopsis thaliana (Mouse-ear cress).